We begin with the raw amino-acid sequence, 206 residues long: Probable GTP-binding protein EngB (206 aa).

An EngB-type G domain is found at Asp-7–Asp-195. Residues Gly-15–Ser-22, Gly-41–Ser-45, Asp-60–Gly-63, Asn-140–Asp-143, and Ile-175–Ala-177 contribute to the GTP site. Ser-22 and Thr-43 together coordinate Mg(2+).

Belongs to the TRAFAC class TrmE-Era-EngA-EngB-Septin-like GTPase superfamily. EngB GTPase family. Mg(2+) is required as a cofactor.

In terms of biological role, necessary for normal cell division and for the maintenance of normal septation. In Haloquadratum walsbyi (strain DSM 16790 / HBSQ001), this protein is Probable GTP-binding protein EngB.